We begin with the raw amino-acid sequence, 456 residues long: Frizzled/smoothened-like sans CRD protein F (456 aa).

The first 30 residues, Met-1 to Ser-30, serve as a signal peptide directing secretion. The Extracellular portion of the chain corresponds to Gln-31–Lys-92. N-linked (GlcNAc...) asparagine glycans are attached at residues Asn-34, Asn-52, and Asn-70. Residues Phe-93–Val-113 form a helical membrane-spanning segment. The Cytoplasmic portion of the chain corresponds to Thr-114–Thr-127. The helical transmembrane segment at Ile-128 to Phe-148 threads the bilayer. Over Gly-149 to Ser-174 the chain is Extracellular. N-linked (GlcNAc...) asparagine glycosylation is present at Asn-151. The helical transmembrane segment at Ser-175–Phe-195 threads the bilayer. The Cytoplasmic segment spans residues Asp-196–Lys-211. A helical transmembrane segment spans residues Tyr-212–Asp-232. The Extracellular portion of the chain corresponds to Gln-233 to Leu-252. A helical transmembrane segment spans residues Ile-253–Ile-273. Topologically, residues Leu-274–Leu-297 are cytoplasmic. The chain crosses the membrane as a helical span at residues Ile-298–Val-318. The Extracellular portion of the chain corresponds to Val-319–Ser-354. A helical transmembrane segment spans residues Glu-355–Ile-375. Residues Asn-376–Ile-456 are Cytoplasmic-facing. Residues Ala-403–Thr-422 form a disordered region.

Belongs to the G-protein coupled receptor Fz/Smo family.

The protein localises to the membrane. The protein is Frizzled/smoothened-like sans CRD protein F (fscF) of Dictyostelium discoideum (Social amoeba).